Here is a 397-residue protein sequence, read N- to C-terminus: tRNA (guanine-N(7)-)-methyltransferase non-catalytic subunit wuho (397 aa).

WD repeat units follow at residues 75-115 (KVEV…AQLL), 163-202 (GHLS…DIHS), 206-244 (GHKE…ELLL), and 303-343 (AGTW…RASG).

This sequence belongs to the WD repeat TRM82 family. In terms of assembly, forms a heterodimer with the catalytic subunit Mettl1. Interacts with mei-P26 and weakly interacts with bgcn; required for the function or formation of the mei-P26-bgcn-bam-sxl complex. Interacts with nanos; may be involved in mei-P26-dependent derepression of the BMP signaling pathway. Interacts with Myc; the interaction may be mediated by mei-P26 and may be involved in the regulation of ribosome biogenesis. In testis, it is present at high level in hub cells, a niche for germline stem cells of testis. Ubiquitously expressed in all testicular cells throughout spermatogenesis. Ubiquitously expressed in all germline and somatic cells of the ovary.

The protein resides in the nucleus. The protein localises to the cytoplasm. It participates in tRNA modification; N(7)-methylguanine-tRNA biosynthesis. Required for the Mettl1-dependent formation of N(7)-methylguanine at position 46 (m7G46) in tRNA. In the Mettl1-wuho methyltransferase complex, it is required to stabilize and induce conformational changes of the catalytic subunit. Required for binding of nanos mRNA and repression of translation by the mei-P26-bgcn-bam-sxl complex. May cooperate with mei-P26 and nanos to derepress the BMP signaling pathway. May cooperate with mei-P26 to suppress expression of a subset of microRNAs. May cooperate with mei-P26 to regulate bam expression levels in germline cells during gametogenesis. Required to promote mitosis to meiosis transition during gametogenesis. May regulate germline cell division in part by regulating ribosome biogenesis. This chain is tRNA (guanine-N(7)-)-methyltransferase non-catalytic subunit wuho, found in Drosophila persimilis (Fruit fly).